Here is a 259-residue protein sequence, read N- to C-terminus: UPF0246 protein PFL_1025 (259 aa).

Belongs to the UPF0246 family.

In Pseudomonas fluorescens (strain ATCC BAA-477 / NRRL B-23932 / Pf-5), this protein is UPF0246 protein PFL_1025.